A 447-amino-acid chain; its full sequence is Alpha-1,3-mannosyl-glycoprotein 2-beta-N-acetylglucosaminyltransferase (447 aa).

Over 1 to 6 the chain is Cytoplasmic; that stretch reads MLKKQT. Residues 7 to 29 traverse the membrane as a helical; Signal-anchor for type II membrane protein segment; that stretch reads AGLVLWGAIIFVGWNALLLLFFW. Over 30-447 the chain is Lumenal; the sequence is TRPAPGRLPS…TWTGYDPSWN (418 aa). Cys115 and Cys145 are oxidised to a cystine. Positions 117, 144, 190, and 212 each coordinate substrate. Asp213 provides a ligand contact to Mn(2+). Cys239 and Cys305 are oxidised to a cystine. The active-site Proton acceptor is the Asp291. Ser322 serves as a coordination point for substrate.

This sequence belongs to the glycosyltransferase 13 family. As to quaternary structure, interacts with MGAT4D. Interacts with BRI3. Mn(2+) is required as a cofactor. In terms of tissue distribution, detected in kidney, liver and brain.

Its subcellular location is the golgi apparatus membrane. It localises to the cytoplasm. It is found in the perinuclear region. The enzyme catalyses N(4)-(alpha-D-Man-(1-&gt;3)-[alpha-D-Man-(1-&gt;3)-[alpha-D-Man-(1-&gt;6)]-alpha-D-Man-(1-&gt;6)]-beta-D-Man-(1-&gt;4)-beta-D-GlcNAc-(1-&gt;4)-beta-D-GlcNAc)-L-asparaginyl-[protein] (N-glucan mannose isomer 5A1,2) + UDP-N-acetyl-alpha-D-glucosamine = N(4)-{beta-D-GlcNAc-(1-&gt;2)-alpha-D-Man-(1-&gt;3)-[alpha-D-Man-(1-&gt;3)-[alpha-D-Man-(1-&gt;6)]-alpha-D-Man-(1-&gt;6)]-beta-D-Man-(1-&gt;4)-beta-D-GlcNAc-(1-&gt;4)-beta-D-GlcNAc}-L-asparaginyl-[protein] + UDP + H(+). The protein operates within protein modification; protein glycosylation. Its function is as follows. Initiates complex N-linked carbohydrate formation. Essential for the conversion of high-mannose to hybrid and complex N-glycans. The sequence is that of Alpha-1,3-mannosyl-glycoprotein 2-beta-N-acetylglucosaminyltransferase (Mgat1) from Mus musculus (Mouse).